The following is a 372-amino-acid chain: Mannan endo-1,4-beta-mannosidase 8 (372 aa).

Substrate-binding residues include tryptophan 57 and asparagine 172. Glutamate 173 functions as the Proton donor in the catalytic mechanism. Residue tyrosine 253 participates in substrate binding. The active-site Nucleophile is the glutamate 293. Residue tryptophan 335 participates in substrate binding.

This sequence belongs to the glycosyl hydrolase 5 (cellulase A) family. In terms of tissue distribution, expressed in stems and leaves and seeds.

The enzyme catalyses Random hydrolysis of (1-&gt;4)-beta-D-mannosidic linkages in mannans, galactomannans and glucomannans.. The polypeptide is Mannan endo-1,4-beta-mannosidase 8 (MAN8) (Oryza sativa subsp. japonica (Rice)).